Reading from the N-terminus, the 279-residue chain is Putative E3 ubiquitin-protein ligase C36B7.05c (279 aa).

The segment at 27-122 adopts an FYVE-type zinc-finger fold; that stretch reads DDESAQCNNC…VCVNCRQQLS (96 aa). 8 residues coordinate Zn(2+): Cys33, Cys36, Cys49, Cys52, Cys57, Cys60, Cys114, and Cys117. Ser200 is modified (phosphoserine). The RING-type; atypical zinc-finger motif lies at 230–273; the sequence is CIICFEEFAAGDRVARIEYCLCIFHLKCYRDWLSTGAAGCPVHA.

Its subcellular location is the cytoplasm. It is found in the nucleus. The protein resides in the endosome membrane. It localises to the vacuole membrane. It catalyses the reaction S-ubiquitinyl-[E2 ubiquitin-conjugating enzyme]-L-cysteine + [acceptor protein]-L-lysine = [E2 ubiquitin-conjugating enzyme]-L-cysteine + N(6)-ubiquitinyl-[acceptor protein]-L-lysine.. It participates in protein modification; protein ubiquitination. Its function is as follows. Functions as an E3 ubiquitin-protein ligase. Binds phospholipid vesicles containing phosphatidylinositol 3-phosphate. This chain is Putative E3 ubiquitin-protein ligase C36B7.05c, found in Schizosaccharomyces pombe (strain 972 / ATCC 24843) (Fission yeast).